Reading from the N-terminus, the 400-residue chain is Exodeoxyribonuclease 7 large subunit (400 aa).

This sequence belongs to the XseA family. In terms of assembly, heterooligomer composed of large and small subunits.

The protein resides in the cytoplasm. It carries out the reaction Exonucleolytic cleavage in either 5'- to 3'- or 3'- to 5'-direction to yield nucleoside 5'-phosphates.. Its function is as follows. Bidirectionally degrades single-stranded DNA into large acid-insoluble oligonucleotides, which are then degraded further into small acid-soluble oligonucleotides. This Clostridium perfringens (strain SM101 / Type A) protein is Exodeoxyribonuclease 7 large subunit.